Consider the following 529-residue polypeptide: DEP domain-containing protein 1B (529 aa).

The region spanning 24 to 108 is the DEP domain; that stretch reads FRARMPLRRH…DNRHLYRFPP (85 aa). Phosphoserine is present on Ser160. Positions 201 to 393 constitute a Rho-GAP domain; the sequence is DSLEEVLNTK…FLMDNYQEIL (193 aa). The residue at position 436 (Ser436) is a Phosphoserine.

In Mus musculus (Mouse), this protein is DEP domain-containing protein 1B (Depdc1b).